A 197-amino-acid polypeptide reads, in one-letter code: Phosphoheptose isomerase (197 aa).

The 163-residue stretch at 34–196 folds into the SIS domain; sequence MVQCLLGGNK…DRTLFPQDEQ (163 aa). Residue 49–51 coordinates substrate; the sequence is NGG. Histidine 58 and glutamate 62 together coordinate Zn(2+). Substrate is bound by residues glutamate 62, 91-92, 117-119, serine 122, and glutamine 172; these read ND and STS. The Zn(2+) site is built by glutamine 172 and histidine 180.

This sequence belongs to the SIS family. GmhA subfamily. As to quaternary structure, homotetramer. Zn(2+) is required as a cofactor.

It localises to the cytoplasm. The enzyme catalyses 2 D-sedoheptulose 7-phosphate = D-glycero-alpha-D-manno-heptose 7-phosphate + D-glycero-beta-D-manno-heptose 7-phosphate. The protein operates within carbohydrate biosynthesis; D-glycero-D-manno-heptose 7-phosphate biosynthesis; D-glycero-alpha-D-manno-heptose 7-phosphate and D-glycero-beta-D-manno-heptose 7-phosphate from sedoheptulose 7-phosphate: step 1/1. Catalyzes the isomerization of sedoheptulose 7-phosphate in D-glycero-D-manno-heptose 7-phosphate. This is Phosphoheptose isomerase from Shewanella piezotolerans (strain WP3 / JCM 13877).